Here is a 114-residue protein sequence, read N- to C-terminus: Large ribosomal subunit protein uL24 (114 aa).

This sequence belongs to the universal ribosomal protein uL24 family. Part of the 50S ribosomal subunit.

One of two assembly initiator proteins, it binds directly to the 5'-end of the 23S rRNA, where it nucleates assembly of the 50S subunit. Its function is as follows. One of the proteins that surrounds the polypeptide exit tunnel on the outside of the subunit. This is Large ribosomal subunit protein uL24 from Thermomicrobium roseum (strain ATCC 27502 / DSM 5159 / P-2).